The chain runs to 356 residues: Phospho-2-dehydro-3-deoxyheptonate aldolase, Tyr-sensitive (356 aa).

It belongs to the class-I DAHP synthase family.

It carries out the reaction D-erythrose 4-phosphate + phosphoenolpyruvate + H2O = 7-phospho-2-dehydro-3-deoxy-D-arabino-heptonate + phosphate. It participates in metabolic intermediate biosynthesis; chorismate biosynthesis; chorismate from D-erythrose 4-phosphate and phosphoenolpyruvate: step 1/7. Functionally, stereospecific condensation of phosphoenolpyruvate (PEP) and D-erythrose-4-phosphate (E4P) giving rise to 3-deoxy-D-arabino-heptulosonate-7-phosphate (DAHP). This Salmonella typhi protein is Phospho-2-dehydro-3-deoxyheptonate aldolase, Tyr-sensitive (aroF).